The sequence spans 179 residues: ATP synthase subunit delta (179 aa).

It belongs to the ATPase delta chain family. F-type ATPases have 2 components, F(1) - the catalytic core - and F(0) - the membrane proton channel. F(1) has five subunits: alpha(3), beta(3), gamma(1), delta(1), epsilon(1). F(0) has three main subunits: a(1), b(2) and c(10-14). The alpha and beta chains form an alternating ring which encloses part of the gamma chain. F(1) is attached to F(0) by a central stalk formed by the gamma and epsilon chains, while a peripheral stalk is formed by the delta and b chains.

The protein localises to the cell membrane. F(1)F(0) ATP synthase produces ATP from ADP in the presence of a proton or sodium gradient. F-type ATPases consist of two structural domains, F(1) containing the extramembraneous catalytic core and F(0) containing the membrane proton channel, linked together by a central stalk and a peripheral stalk. During catalysis, ATP synthesis in the catalytic domain of F(1) is coupled via a rotary mechanism of the central stalk subunits to proton translocation. Its function is as follows. This protein is part of the stalk that links CF(0) to CF(1). It either transmits conformational changes from CF(0) to CF(1) or is implicated in proton conduction. The chain is ATP synthase subunit delta from Ureaplasma urealyticum serovar 10 (strain ATCC 33699 / Western).